An 89-amino-acid chain; its full sequence is Small ribosomal subunit protein uS15 (89 aa).

Belongs to the universal ribosomal protein uS15 family. In terms of assembly, part of the 30S ribosomal subunit. Forms a bridge to the 50S subunit in the 70S ribosome, contacting the 23S rRNA.

One of the primary rRNA binding proteins, it binds directly to 16S rRNA where it helps nucleate assembly of the platform of the 30S subunit by binding and bridging several RNA helices of the 16S rRNA. In terms of biological role, forms an intersubunit bridge (bridge B4) with the 23S rRNA of the 50S subunit in the ribosome. This is Small ribosomal subunit protein uS15 from Chlorobaculum tepidum (strain ATCC 49652 / DSM 12025 / NBRC 103806 / TLS) (Chlorobium tepidum).